We begin with the raw amino-acid sequence, 455 residues long: T-box protein VegT-B (455 aa).

Positions 57–230 form a DNA-binding region, T-box; that stretch reads LWTQFHQEGT…HNPFAKGFRE (174 aa). The span at 229-241 shows a compositional bias: basic and acidic residues; sequence REQERSHKRDDVL. 2 disordered regions span residues 229–276 and 295–350; these read REQE…RIKE and ANQG…RRLT. Residues 308 to 326 show a composition bias toward polar residues; sequence GVNQEQQVPTSSSNFYIKS.

Forms a repression complex on the promoters of the nodal/nr1 and siamois genes with the maternal factors tcf7l1/tcf3 and pouf5.1/oct-25. Interacts (via C-terminus) with tcf7l1/tcf3 (via N-terminus). Also interacts with the other POU-domain transcription factors pou5f1.2/oct-91 and pou5f1.3/oct-60. As to expression, maternally localized to the vegetal hemisphere of oocytes. Zygotic expression parallels blastopore formation and shifts from dorsal expression in the marginal zone of late blastula and early gastrula stages to a ventral/lateral expression at later stages. During neurula and tailbud stages, expressed in the posterior and anterior ends of the embryo. During tailbud stages, expressed in a subset of interneurons in the neural tube.

The protein localises to the nucleus. Transcription factor required for both mesoderm and endoderm formation in the embryo; signaling determinants and concentration levels may determine which germ layer is formed. Acts together with beta-catenin to activate genes that are responsible for mesoderm induction including wnt-8, eomes t/bra, siamois, mix1 and sox17. Directly binds to promoter DNA. Patterns the mesoderm along the dorsoventral and posterior axis. Activates siamois gene transcription when alone or in combination with beta-catenin, but inhibits siamois transcription in combination with pou5f1.1/oct-25. The protein is T-box protein VegT-B (vegt-b) of Xenopus laevis (African clawed frog).